Reading from the N-terminus, the 466-residue chain is Cysteine--tRNA ligase (466 aa).

Zn(2+) is bound at residue cysteine 33. The short motif at 35-45 (PTVYDFAHIGN) is the 'HIGH' region element. Zn(2+)-binding residues include cysteine 221, histidine 246, and glutamate 250. Residues 279–283 (KMSKS) carry the 'KMSKS' region motif. Lysine 282 provides a ligand contact to ATP.

Belongs to the class-I aminoacyl-tRNA synthetase family. In terms of assembly, monomer. The cofactor is Zn(2+).

It localises to the cytoplasm. The catalysed reaction is tRNA(Cys) + L-cysteine + ATP = L-cysteinyl-tRNA(Cys) + AMP + diphosphate. This Sinorhizobium medicae (strain WSM419) (Ensifer medicae) protein is Cysteine--tRNA ligase.